The primary structure comprises 186 residues: Outer-membrane lipoprotein LolB (186 aa).

An N-terminal signal peptide occupies residues 1 to 16; sequence MRRLAVIASLAWALGG. Residue cysteine 17 is the site of N-palmitoyl cysteine attachment. Cysteine 17 is lipidated: S-diacylglycerol cysteine.

Belongs to the LolB family. As to quaternary structure, monomer.

The protein localises to the cell outer membrane. In terms of biological role, plays a critical role in the incorporation of lipoproteins in the outer membrane after they are released by the LolA protein. The protein is Outer-membrane lipoprotein LolB of Thiobacillus denitrificans (strain ATCC 25259 / T1).